Reading from the N-terminus, the 56-residue chain is Large ribosomal subunit protein bL33 (56 aa).

Belongs to the bacterial ribosomal protein bL33 family.

This Glaesserella parasuis serovar 5 (strain SH0165) (Haemophilus parasuis) protein is Large ribosomal subunit protein bL33.